Here is a 660-residue protein sequence, read N- to C-terminus: Threonine--tRNA ligase (660 aa).

The TGS domain maps to 1-49; that stretch reads MPDSIVHVKKGQRFLDVIKDKNVVAVKIDSVLHDLRDVAERDVDAIPVS. The interval 225 to 554 is catalytic; the sequence is DHRRIIAEMD…LLEHYAGKLP (330 aa). Residues C318, H369, and H531 each contribute to the Zn(2+) site.

It belongs to the class-II aminoacyl-tRNA synthetase family. Homodimer. Zn(2+) serves as cofactor.

The protein localises to the cytoplasm. The enzyme catalyses tRNA(Thr) + L-threonine + ATP = L-threonyl-tRNA(Thr) + AMP + diphosphate + H(+). Catalyzes the attachment of threonine to tRNA(Thr) in a two-step reaction: L-threonine is first activated by ATP to form Thr-AMP and then transferred to the acceptor end of tRNA(Thr). This is Threonine--tRNA ligase from Thermoplasma acidophilum (strain ATCC 25905 / DSM 1728 / JCM 9062 / NBRC 15155 / AMRC-C165).